The sequence spans 332 residues: 2,3-diketo-L-gulonate reductase (332 aa).

The Proton donor role is filled by histidine 44. Residues 168 to 174 (ITMVDMS), 224 to 225 (WK), and 304 to 306 (GHE) contribute to the NAD(+) site.

Belongs to the LDH2/MDH2 oxidoreductase family. DlgD subfamily. As to quaternary structure, homodimer.

It is found in the cytoplasm. The enzyme catalyses 3-dehydro-L-gulonate + NAD(+) = 2,3-dioxo-L-gulonate + NADH + H(+). It carries out the reaction 3-dehydro-L-gulonate + NADP(+) = 2,3-dioxo-L-gulonate + NADPH + H(+). Functionally, catalyzes the reduction of 2,3-diketo-L-gulonate in the presence of NADH, to form 3-keto-L-gulonate. The polypeptide is 2,3-diketo-L-gulonate reductase (Escherichia coli (strain SMS-3-5 / SECEC)).